Reading from the N-terminus, the 352-residue chain is 4-hydroxy-3-methylbut-2-en-1-yl diphosphate synthase (flavodoxin) (352 aa).

4 residues coordinate [4Fe-4S] cluster: Cys262, Cys265, Cys297, and Glu304.

The protein belongs to the IspG family. The cofactor is [4Fe-4S] cluster.

The enzyme catalyses (2E)-4-hydroxy-3-methylbut-2-enyl diphosphate + oxidized [flavodoxin] + H2O + 2 H(+) = 2-C-methyl-D-erythritol 2,4-cyclic diphosphate + reduced [flavodoxin]. Its pathway is isoprenoid biosynthesis; isopentenyl diphosphate biosynthesis via DXP pathway; isopentenyl diphosphate from 1-deoxy-D-xylulose 5-phosphate: step 5/6. Converts 2C-methyl-D-erythritol 2,4-cyclodiphosphate (ME-2,4cPP) into 1-hydroxy-2-methyl-2-(E)-butenyl 4-diphosphate. The chain is 4-hydroxy-3-methylbut-2-en-1-yl diphosphate synthase (flavodoxin) from Nitratiruptor sp. (strain SB155-2).